Here is a 153-residue protein sequence, read N- to C-terminus: Arginine regulator (153 aa).

This sequence belongs to the ArgR family.

It is found in the cytoplasm. It functions in the pathway amino-acid degradation; L-arginine degradation via ADI pathway. Functionally, regulates the transcription of the arc operon, involved in arginine catabolism. The chain is Arginine regulator (argR1) from Lactiplantibacillus plantarum (strain ATCC BAA-793 / NCIMB 8826 / WCFS1) (Lactobacillus plantarum).